The primary structure comprises 86 residues: Large ribosomal subunit protein bL27 (86 aa).

Residues 1–21 are disordered; sequence MAHKKGASSSRNGRDSAAQRL.

It belongs to the bacterial ribosomal protein bL27 family.

In Mycobacterium tuberculosis (strain CDC 1551 / Oshkosh), this protein is Large ribosomal subunit protein bL27 (rpmA).